Reading from the N-terminus, the 223-residue chain is MPLPSVTPLHVDAFTFPPAVESPASHKRLFLGGAGKFVIVTVIGVYLEAMALPSISAKWKGKNAKELTESVPFFRQLVTGEFEKLARVTMKKRLTGIQYSEKVVENCEEIMKASGKYTRSEAKAIDQFLMVFKNQDFPPGSSIIFAICPKGSLTIAFSKEERVPKTGKAVIKNKLLGEAVLESMIGKNGVSPATRKSLAERLSKLMNKKDPYNEANVNVATKN.

Substrate contacts are provided by T41, N106, and S183.

It belongs to the chalcone isomerase family.

It carries out the reaction a chalcone = a flavanone.. Its pathway is secondary metabolite biosynthesis; flavonoid biosynthesis. Its function is as follows. Catalyzes the intramolecular cyclization of bicyclic chalcones into tricyclic (S)-flavanones. Responsible for the isomerization of 4,2',4',6'-tetrahydroxychalcone (also termed chalcone) into naringenin. The protein is Chalcone--flavanone isomerase 2 (CHI2) of Arabidopsis thaliana (Mouse-ear cress).